The sequence spans 532 residues: Fatty aldehyde dehydrogenase HFD1 (532 aa).

S111 carries the phosphoserine modification. The chain crosses the membrane as a helical span at residues 134-152 (IIAPFNFPLLLAFAPLAAA). Position 214–219 (214–219 (GSPRVG)) interacts with NAD(+). Active-site residues include E236 and C273.

It belongs to the aldehyde dehydrogenase family.

Its subcellular location is the lipid droplet. It localises to the mitochondrion outer membrane. The protein resides in the endosome membrane. The protein localises to the cytoplasmic granule membrane. The catalysed reaction is an aldehyde + NAD(+) + H2O = a carboxylate + NADH + 2 H(+). It carries out the reaction hexadecanoate + NADH + 2 H(+) = hexadecanal + NAD(+) + H2O. It catalyses the reaction 4-hydroxybenzaldehyde + NAD(+) + H2O = 4-hydroxybenzoate + NADH + 2 H(+). Catalyzes the oxidation of long-chain aliphatic aldehydes to fatty acids. Responsible for conversion of the sphingosine 1-phosphate (S1P) degradation product hexadecenal to hexadecenoic acid. Involved in coenzyme Q (CoQ) biosynthesis, catalyzing the last step in the tyrosine to 4-hydroxybenzoate (4-HB) pathway. Oxidizes 4-hydroxybenzaldehyde (4-Hbz) to 4-HB, the aromatic precursor for coenzyme Q. This is Fatty aldehyde dehydrogenase HFD1 (HFD1) from Saccharomyces cerevisiae (strain ATCC 204508 / S288c) (Baker's yeast).